The chain runs to 202 residues: Large ribosomal subunit protein bL9 (202 aa).

A disordered region spans residues 177–202 (AGEFFDPEAEPDDVAEAGGEQTAEEK). Residues 181-191 (FDPEAEPDDVA) show a composition bias toward acidic residues.

This sequence belongs to the bacterial ribosomal protein bL9 family.

Binds to the 23S rRNA. This chain is Large ribosomal subunit protein bL9, found in Nitrobacter hamburgensis (strain DSM 10229 / NCIMB 13809 / X14).